The following is a 216-amino-acid chain: U1 small nuclear ribonucleoprotein A (216 aa).

2 RRM domains span residues 7–86 (QTIY…YSKS) and 142–216 (QILF…FAKK). The interval 97-142 (TFKERPKKVKPPKPAPGTDEKKDKKKKPSSAENSNPNAQTEQPPNQ) is disordered. The span at 126–142 (SAENSNPNAQTEQPPNQ) shows a compositional bias: polar residues.

The protein belongs to the RRM U1 A/B'' family. As to quaternary structure, belongs to the spliceosome where it is associated with snRNP U1. Interacts with the SMN complex.

The protein resides in the nucleus. In terms of biological role, binds stem loop II of U1 snRNA. It is the first snRNP to interact with pre-mRNA. This interaction is required for the subsequent binding of U2 snRNP and the U4/U6/U5 tri-snRNP. Plays a role in regulating sex-lethal splicing. This is U1 small nuclear ribonucleoprotein A (snf) from Drosophila melanogaster (Fruit fly).